The chain runs to 523 residues: ATP synthase subunit alpha (523 aa).

179–186 (GDRQTGKT) is an ATP binding site.

This sequence belongs to the ATPase alpha/beta chains family. As to quaternary structure, F-type ATPases have 2 components, CF(1) - the catalytic core - and CF(0) - the membrane proton channel. CF(1) has five subunits: alpha(3), beta(3), gamma(1), delta(1), epsilon(1). CF(0) has three main subunits: a(1), b(2) and c(9-12). The alpha and beta chains form an alternating ring which encloses part of the gamma chain. CF(1) is attached to CF(0) by a central stalk formed by the gamma and epsilon chains, while a peripheral stalk is formed by the delta and b chains.

The protein resides in the cell inner membrane. The enzyme catalyses ATP + H2O + 4 H(+)(in) = ADP + phosphate + 5 H(+)(out). Produces ATP from ADP in the presence of a proton gradient across the membrane. The alpha chain is a regulatory subunit. This is ATP synthase subunit alpha from Vibrio parahaemolyticus serotype O3:K6 (strain RIMD 2210633).